We begin with the raw amino-acid sequence, 272 residues long: MNISKLPPLSPSVIRRILFYLLMLLFCQQLAMIFWRVGLPDNSPVASVQITPAQARQQPVTLNDFTLFGVSPEKNRSGALDASQMSNLPPSTLNLSLTGVMVGDDTARSIAIISKDNEQFSRGVNEEVPGYNAKIVSIRPDKVVLQYQGRYEVLGLYNQEENSADGVSGAQLNEQLQQRASTTMSDYVSFSPVMNDNKLHGYRLNPGPKSDSFYRVGLQDNDMAVALNGLDLRDEEQAKKAMERMADVHNFTLTVERDGQRQDIYMEFGGDE.

Residues 1-16 lie on the Cytoplasmic side of the membrane; that stretch reads MNISKLPPLSPSVIRR. Residues 17 to 35 traverse the membrane as a helical segment; the sequence is ILFYLLMLLFCQQLAMIFW. Over 36 to 272 the chain is Periplasmic; that stretch reads RVGLPDNSPV…DIYMEFGGDE (237 aa).

Belongs to the GSP C family.

Its subcellular location is the cell inner membrane. Functionally, involved in a type II secretion system (T2SS, formerly general secretion pathway, GSP) for the export of proteins. Required for the translocation of the multiple pectic enzymes. This is Type II secretion system protein C (outC) from Dickeya chrysanthemi (Pectobacterium chrysanthemi).